The primary structure comprises 487 residues: Bifunctional protein HldE (487 aa).

Residues 1–326 (MERREVESFF…QEIVAEVGHG (326 aa)) are ribokinase. Residue 205 to 208 (NRKE) participates in ATP binding. Residue Asp-275 is part of the active site. Positions 356-487 (FTNGCFDLLH…RIIEKILSSY (132 aa)) are cytidylyltransferase.

This sequence in the N-terminal section; belongs to the carbohydrate kinase PfkB family. The protein in the C-terminal section; belongs to the cytidylyltransferase family. Homodimer.

It catalyses the reaction D-glycero-beta-D-manno-heptose 7-phosphate + ATP = D-glycero-beta-D-manno-heptose 1,7-bisphosphate + ADP + H(+). It carries out the reaction D-glycero-beta-D-manno-heptose 1-phosphate + ATP + H(+) = ADP-D-glycero-beta-D-manno-heptose + diphosphate. It functions in the pathway nucleotide-sugar biosynthesis; ADP-L-glycero-beta-D-manno-heptose biosynthesis; ADP-L-glycero-beta-D-manno-heptose from D-glycero-beta-D-manno-heptose 7-phosphate: step 1/4. It participates in nucleotide-sugar biosynthesis; ADP-L-glycero-beta-D-manno-heptose biosynthesis; ADP-L-glycero-beta-D-manno-heptose from D-glycero-beta-D-manno-heptose 7-phosphate: step 3/4. Its function is as follows. Catalyzes the phosphorylation of D-glycero-D-manno-heptose 7-phosphate at the C-1 position to selectively form D-glycero-beta-D-manno-heptose-1,7-bisphosphate. Catalyzes the ADP transfer from ATP to D-glycero-beta-D-manno-heptose 1-phosphate, yielding ADP-D-glycero-beta-D-manno-heptose. The sequence is that of Bifunctional protein HldE from Citrifermentans bemidjiense (strain ATCC BAA-1014 / DSM 16622 / JCM 12645 / Bem) (Geobacter bemidjiensis).